We begin with the raw amino-acid sequence, 1941 residues long: Integrin beta-like protein B (1941 aa).

An N-terminal signal peptide occupies residues Met1–Ala20. The Extracellular segment spans residues Thr21–Thr1871. Residues Tyr420 to Ser457 form the EGF-like domain. 2 disulfide bridges follow: Cys430–Cys445 and Cys447–Cys456. The VWFA domain occupies Asp513–Leu696. N-linked (GlcNAc...) asparagine glycans are attached at residues Asn1400, Asn1505, Asn1530, Asn1606, Asn1652, Asn1738, Asn1777, Asn1848, Asn1866, and Asn1869. Residues Val1872 to Trp1892 traverse the membrane as a helical segment. At Lys1893–Leu1941 the chain is on the cytoplasmic side. The tract at residues Met1921–Leu1941 is disordered.

Belongs to the SIB family. Interacts with talA/talin.

It localises to the membrane. In terms of biological role, implicated in cellular adhesion. This Dictyostelium discoideum (Social amoeba) protein is Integrin beta-like protein B (sibB).